A 338-amino-acid polypeptide reads, in one-letter code: MLSALARPVGAALRRSFSTSAQNNAKVAVLGASGGIGQPLSLLLKNSPLVSRLTLYDIAHTPGVAADLSHIETRANVKGYLGPEQLPDCLKGCDVVVIPAGVPRKPGMTRDDLFNTNATIVATLTAACAQHCPEAMICIISNPVNSTIPITAEVFKKHGVYNPNKIFGVTTLDIVRANTFVAELKGLDPARVNVPVIGGHAGKTIIPLISQCTPKVDFPQDQLATLTGRIQEAGTEVVKAKAGAGSATLSMAYAGARFVFSLVDAMNGKEGVIECSFVQSKETECTYFSTPLLLGKKGLEKNLGIGKITPFEEKMIAEAIPELKASIKKGEDFVKNMK.

The N-terminal 24 residues, 1 to 24, are a transit peptide targeting the mitochondrion; sequence MLSALARPVGAALRRSFSTSAQNN. Residues 31–37 and aspartate 57 contribute to the NAD(+) site; that span reads GASGGIG. Residue serine 33 is glycosylated (O-linked (GlcNAc) serine). An N6-acetyllysine; alternate mark is found at lysine 78 and lysine 91. An N6-succinyllysine; alternate mark is found at lysine 78 and lysine 91. The substrate site is built by arginine 104 and arginine 110. NAD(+) is bound by residues asparagine 117 and 140–142; that span reads ISN. Asparagine 142 lines the substrate pocket. Position 165 is an N6-acetyllysine (lysine 165). Arginine 176 is a binding site for substrate. The residue at position 185 (lysine 185) is an N6-acetyllysine; alternate. Lysine 185 is modified (N6-succinyllysine; alternate). Residue histidine 200 is the Proton acceptor of the active site. The residue at position 203 (lysine 203) is an N6-succinyllysine. Residues lysine 215 and lysine 239 each carry the N6-acetyllysine; alternate modification. N6-succinyllysine; alternate is present on residues lysine 215 and lysine 239. Position 239 is an N6-malonyllysine; alternate (lysine 239). Serine 246 carries the post-translational modification Phosphoserine. NAD(+) is bound at residue methionine 251. N6-succinyllysine is present on lysine 269. Lysine 296, lysine 301, lysine 307, lysine 314, and lysine 324 each carry N6-acetyllysine; alternate. Residues lysine 296, lysine 301, lysine 307, lysine 314, and lysine 324 each carry the N6-succinyllysine; alternate modification. Lysine 307 bears the N6-malonyllysine; alternate mark. Serine 326 carries the phosphoserine modification. Residues lysine 328, lysine 329, and lysine 335 each carry the N6-acetyllysine; alternate modification. At lysine 328 the chain carries N6-succinyllysine; alternate. An N6-malonyllysine; alternate modification is found at lysine 329. The residue at position 335 (lysine 335) is an N6-succinyllysine; alternate.

The protein belongs to the LDH/MDH superfamily. MDH type 1 family. As to quaternary structure, homodimer. Post-translationally, acetylation is enhanced after treatment either with trichostin A (TCA) or with nicotinamide (NAM) with the appearance of tri- and tetraacetylations. Glucose also increases acetylation. In terms of tissue distribution, expressed in flagella of epididymal sperm.

Its subcellular location is the mitochondrion matrix. It carries out the reaction (S)-malate + NAD(+) = oxaloacetate + NADH + H(+). Its activity is regulated as follows. Enzyme activity is enhanced by acetylation. The chain is Malate dehydrogenase, mitochondrial (Mdh2) from Rattus norvegicus (Rat).